Consider the following 297-residue polypeptide: MVHQVLYRALVSTKWLAESIRSGKVGPSLRVLDASWYSPGTRQARKEYQERHVPGASFFDIEECRDTTSPYEMMLPSEAHFGDYVGNLGISNDTHVVVYDGDDLGSFYAPRVWWMFRVFGHRTVSVLNGGFRNWLKEGHPVTSEPSRPEPAVFKATLNRSLLKTYEQVLENLQSKRFQLVDSRAQGRYLGTQPEPDAVGLDSGHIRGSVNVPFMNFLTEDGFEKSPEELRAIFQDKKVDLSQPLIATCRKGVTACHIALAAYLCGKPDVAVYDGSWSEWFRRAPPETRVSQGKSGKA.

An N6-acetyllysine; alternate modification is found at K14. Position 14 is an N6-succinyllysine; alternate (K14). The Rhodanese 1 domain occupies 25 to 143 (VGPSLRVLDA…WLKEGHPVTS (119 aa)). A glycan (O-linked (GlcNAc) serine) is linked at S35. A Phosphoserine modification is found at S38. K136 is modified (N6-acetyllysine; alternate). K136 bears the N6-succinyllysine; alternate mark. A hinge region spans residues 144-159 (EPSRPEPAVFKATLNR). The residue at position 163 (K163) is an N6-acetyllysine. The Rhodanese 2 domain occupies 173–288 (QSKRFQLVDS…WFRRAPPETR (116 aa)). An N6-acetyllysine; alternate modification is found at K175. K175 is modified (N6-succinyllysine; alternate). R187 is a substrate binding site. N6-acetyllysine; alternate is present on K224. N6-succinyllysine; alternate is present on K224. K236 is subject to N6-acetyllysine. N6-acetyllysine; alternate is present on K237. N6-succinyllysine; alternate is present on K237. Catalysis depends on C248, which acts as the Cysteine persulfide intermediate. K250 contributes to the substrate binding site.

In terms of assembly, monomer. Expressed in numerous tissues.

The protein resides in the mitochondrion matrix. The catalysed reaction is thiosulfate + hydrogen cyanide = thiocyanate + sulfite + 2 H(+). Together with MRPL18, acts as a mitochondrial import factor for the cytosolic 5S rRNA. Only the nascent unfolded cytoplasmic form is able to bind to the 5S rRNA. Involved in the formation of iron-sulfur complexes, cyanide detoxification or modification of sulfur-containing enzymes. Other thiol compounds, besides cyanide, can act as sulfur ion acceptors. Also has weak mercaptopyruvate sulfurtransferase (MST) activity. This is Thiosulfate sulfurtransferase (Tst) from Rattus norvegicus (Rat).